Here is a 161-residue protein sequence, read N- to C-terminus: Ribonuclease H (161 aa).

The RNase H type-1 domain occupies 11-152; sequence GPRPVVIHTD…ADQLARDGLT (142 aa). Mg(2+) is bound by residues Asp-20, Glu-58, Asp-80, and Asp-144. The disordered stretch occupies residues 137-161; that stretch reads HDENERADQLARDGLTENRMKSRIG.

Belongs to the RNase H family. Monomer. Mg(2+) is required as a cofactor.

The protein resides in the cytoplasm. The catalysed reaction is Endonucleolytic cleavage to 5'-phosphomonoester.. Its function is as follows. Endonuclease that specifically degrades the RNA of RNA-DNA hybrids. This Rhodopseudomonas palustris (strain HaA2) protein is Ribonuclease H.